Here is a 298-residue protein sequence, read N- to C-terminus: 3'-5' exonuclease crn-4 (298 aa).

Positions 12–192 (LILDFETTSD…DDCLNIATIL (181 aa)) constitute an Exonuclease domain. Residues aspartate 15, glutamate 17, and aspartate 184 each contribute to the Mg(2+) site. Positions 210, 260, 263, and 270 each coordinate Zn(2+).

As to quaternary structure, homodimer (via C-terminus). Interacts with crn-5; interaction promotes the DNase activity of crn-4. Interacts with cps-6, crn-1 and cyn-13. Requires Mg(2+) as cofactor.

Its activity is regulated as follows. Exonuclease activity is inhibited in vitro by pontacyl violet 6R (PV6R), p-chloromercuriphenyl sulfonate (PCMPS), 5,5'-dithiobis(2-nitrobenzoic acid) (DTNB), aurintricarboxylic acid (ATA), 2-morpholin-4-ylethanesulfonate (MES), 4-[(4,6-dichloro-1,3,5-triazin-2-yl)amino]-2-(3-hydroxy-6-oxoxanthen-9-yl)benzoic acid (DR396) and fmoc-d-Cha-OH (FDCO). Interaction with ssRNA is reduced in vitro by PV6R. Possesses 3'-&gt;5' exoribonuclease activity in digestion of DNA and RNA. Cleaves nucleic acid substrates with efficiencies in the following order: single-stranded RNA (ssRNA) &gt; double-stranded DNA (dsDNA) &gt; single-stranded DNA (ssDNA). Involved in apoptotic DNA degradation. This is 3'-5' exonuclease crn-4 (crn-4) from Caenorhabditis elegans.